We begin with the raw amino-acid sequence, 337 residues long: Fructose-1,6-bisphosphatase class 1 (337 aa).

Mg(2+) is bound by residues E89, D112, L114, and D115. Substrate is bound by residues 115 to 118 (DGSS), N208, Y241, and K271. Residue E277 participates in Mg(2+) binding.

It belongs to the FBPase class 1 family. In terms of assembly, homotetramer. Mg(2+) is required as a cofactor.

The protein localises to the cytoplasm. The catalysed reaction is beta-D-fructose 1,6-bisphosphate + H2O = beta-D-fructose 6-phosphate + phosphate. The protein operates within carbohydrate biosynthesis; gluconeogenesis. The polypeptide is Fructose-1,6-bisphosphatase class 1 (Yersinia enterocolitica serotype O:8 / biotype 1B (strain NCTC 13174 / 8081)).